The primary structure comprises 1337 residues: MTPEASANWFSLCWFAWIDPILTAGYTRPMEKDDLYLLQPHRCSEHLGSQLLAALEKRRKQRQDYVEANPNKTDKPAKIPPLMWAMNDIVFRYFWIGGLLKLLADVGTITSPLLVRALINFGRDSYNLRGDRDQAPNLGSGVGLAIGLFLVQALCVFLNVHAFNRGFGTGIILRGALIQAIFQRGMNLSTRARTVGGLGVSKLVTLISADATRIDYAGQFFHMAWTSAVQIIICVALLIWSLSYSALPGIAVLVLMSPIQTAITKRLFALRKKSMVWTDKRNKAVNEVVGGIRVVKQFAWEEPYSVRIAELRRKEMSFHRVRLYLRSLNLALAFATPTIATVLSFVTYALVGNELDAAILFSSLSFFTLLRTPLQFLPIAWNAIVDAKNAADRIEKVFDAEIQRDQIIRDCSATNGIQLEDASFTWETAQAADTAKPVNEKKGQDSPSNEKETPVDRASTLDSLNLTVPRGTLCAIVGGVGSGKSSLISALAGEMRQIAGKVTLSGSTAVCAQTAWIQSTTIRNNIVFGNAFDPERYRYVLEVCCLLPDLDTLADGDQTIVGEKGVSLSGGQKQRLNIARALYHNSEIVLLDDCLSALDARVGADIFANVIAGDAMAGKTRLLVTHSLNVLRSCDWIVHMEEGRITEQGTYAELVESKGRVAELLLTHTKDHFEEEKKEPSKHPIDEIQETAESILDAGSASNRNSEASESTTTTVNAESKDTSNAEGVTNKTEKKDLVAPPAQAKSKALMQDEERFSGSVSRTTYLSYLNAAPLSILLPLFLVAVLVFQGSTIMSPVWLLWWQNGHFGLQQGVYMGIYAVFGITQSLGLLSMGVIFSTFTIKSATTLHHRALQRVLHAPFSFFDTTPQGRITHRFSKDMDTLDNIIGEAMRTLIGTIVQVIGSIVLIAILTPYFLIPVAVILVLYFWIAAYYRSTARELRRIDAGLRSNMHEHFSESLHGLVTIRAFGNVDAFIAENCRRIDKQNRAYWLAQTCQRWLSVRLDFLGSLLILSVAILVVASRFDISPGETGVALSYILTAQSIFGWMIRHAAELENNMSAVERVLHYANHIEQEKPYHIPQVDDALEAREWPERGEIRFEGVEAKYGSSERNVLDKLDLHIAPGEKIAFCGRTGAGKSTLVTTLLRTLELSAGTITIDGIDIASMGLHRLRSSLSLIPQDAVIYSGTLRYNLDPLDQHEDATLHDALQRTSLTDLSLDMTITEEGGNLSAGQRSLISLARAMVRKTRIVILDEATASIDQETDVQIQEVLRNEFDGITTLTVAHRIQTILHSDRVCVLDKGVIVEIGSPAELWAKEKGAFRALCDSANIRYQDGEWK.

A signal peptide spans 1 to 23 (MTPEASANWFSLCWFAWIDPILT). A glycan (N-linked (GlcNAc...) asparagine) is linked at Asn71. A run of 2 helical transmembrane segments spans residues 94–114 (FWIG…SPLL) and 138–158 (LGSG…CVFL). The ABC transmembrane type-1 1 domain occupies 95 to 386 (WIGGLLKLLA…LPIAWNAIVD (292 aa)). A glycan (N-linked (GlcNAc...) asparagine) is linked at Asn187. The next 4 helical transmembrane spans lie at 220–242 (FFHM…IWSL), 247–269 (LPGI…RLFA), 331–351 (ALAF…YALV), and 359–379 (ILFS…FLPI). The 251-residue stretch at 417–667 (IQLEDASFTW…KGRVAELLLT (251 aa)) folds into the ABC transporter 1 domain. Residues 432 to 460 (ADTAKPVNEKKGQDSPSNEKETPVDRAST) form a disordered region. The segment covering 438–455 (VNEKKGQDSPSNEKETPV) has biased composition (basic and acidic residues). N-linked (GlcNAc...) asparagine glycosylation occurs at Asn465. 478-485 (GGVGSGKS) contacts ATP. The interval 699–751 (GSASNRNSEASESTTTTVNAESKDTSNAEGVTNKTEKKDLVAPPAQAKSKALM) is disordered. A compositionally biased stretch (low complexity) spans 700-718 (SASNRNSEASESTTTTVNA). An N-linked (GlcNAc...) asparagine glycan is attached at Asn731. The next 6 helical transmembrane spans lie at 769 to 789 (YLNA…VLVF), 817 to 837 (GIYA…GVIF), 890 to 909 (AMRT…VLIA), 915 to 933 (FLIP…AAYY), 999 to 1019 (LSVR…ILVV), and 1028 to 1048 (GETG…GWMI). Positions 781–1056 (LFLVAVLVFQ…MIRHAAELEN (276 aa)) constitute an ABC transmembrane type-1 2 domain. Asn1057 carries N-linked (GlcNAc...) asparagine glycosylation. Residues 1097 to 1325 (IRFEGVEAKY…EKGAFRALCD (229 aa)) form the ABC transporter 2 domain. Position 1131–1138 (1131–1138 (GRTGAGKS)) interacts with ATP. Asn1227 carries N-linked (GlcNAc...) asparagine glycosylation.

It belongs to the ABC transporter superfamily. ABCC family. Conjugate transporter (TC 3.A.1.208) subfamily.

The protein localises to the membrane. Its function is as follows. Multidrug resistance protein; part of the gene cluster that mediates the biosynthesis of siderophore ferrichrome A which is contributing to organismal virulence. This chain is Multidrug resistance protein fer6, found in Mycosarcoma maydis (Corn smut fungus).